Here is a 307-residue protein sequence, read N- to C-terminus: tRNA pseudouridine synthase B (307 aa).

Asp41 acts as the Nucleophile in catalysis.

This sequence belongs to the pseudouridine synthase TruB family. Type 1 subfamily.

The enzyme catalyses uridine(55) in tRNA = pseudouridine(55) in tRNA. In terms of biological role, responsible for synthesis of pseudouridine from uracil-55 in the psi GC loop of transfer RNAs. In Prochlorococcus marinus (strain AS9601), this protein is tRNA pseudouridine synthase B.